We begin with the raw amino-acid sequence, 382 residues long: Opsin Rh5 (382 aa).

Over 1 to 49 the chain is Extracellular; the sequence is MHINGPSGPQAYVNDSLGDGSVFPMGHGYPAEYQHMVHAHWRGFREAPI. N14 carries an N-linked (GlcNAc...) asparagine glycan. A helical transmembrane segment spans residues 50–76; the sequence is YYHAGFYIAFIVLMLSSIFGNGLVIWI. Topologically, residues 77-88 are cytoplasmic; it reads FSTSKSLRTPSN. A helical membrane pass occupies residues 89-112; that stretch reads LLILNLAIFDLFMCTNMPHYLINA. At 113 to 127 the chain is on the extracellular side; sequence TVGYIVGGDLGCDIY. Cysteines 124 and 201 form a disulfide. The chain crosses the membrane as a helical span at residues 128–147; sequence ALNGGISGMGASITNAFIAF. At 148-165 the chain is on the cytoplasmic side; it reads DRYKTISNPIDGRLSYGQ. Residues 166 to 190 form a helical membrane-spanning segment; the sequence is IVLLILFTWLWATPFSVLPLFQIWG. At 191-214 the chain is on the extracellular side; the sequence is RYQPEGFLTTCSFDYLTNTDENRL. A helical membrane pass occupies residues 215–242; the sequence is FVRTIFVWSYVIPMTMILVSYYKLFTHV. Residues 243 to 278 lie on the Cytoplasmic side of the membrane; that stretch reads RVHEKMLAEQAKKMNVKSLSANANADNMSVELRIAK. Residues 279-302 form a helical membrane-spanning segment; the sequence is AALIIYMLFILAWTPYSVVALIGC. Residues 303–310 are Extracellular-facing; the sequence is FGEQQLIT. A helical membrane pass occupies residues 311 to 335; that stretch reads PFVSMLPCLACKSVSCLDPWVYATS. N6-(retinylidene)lysine is present on K322. The Cytoplasmic segment spans residues 336–382; sequence HPKYRLELERRLPWLGIREKHATSGTSGGQESVASVSGDTLALSVQN. The interval 357–382 is disordered; it reads ATSGTSGGQESVASVSGDTLALSVQN. A compositionally biased stretch (polar residues) spans 358-382; the sequence is TSGTSGGQESVASVSGDTLALSVQN.

Belongs to the G-protein coupled receptor 1 family. Opsin subfamily. In terms of processing, phosphorylated on some or all of the serine and threonine residues present in the C-terminal region. Expressed specifically in the retina. Each Drosophila eye is composed of 800 facets or ommatidia. Each ommatidium contains 8 photoreceptor cells (R1-R8), the R1 to R6 cells are outer cells, while R7 and R8 are inner cells. Rh5 is expressed only in R8 photoreceptor cells in a subset of ommatidia.

The protein resides in the cell projection. The protein localises to the rhabdomere membrane. Visual pigments are the light-absorbing molecules that mediate vision. They consist of an apoprotein, opsin, covalently linked to cis-retinal. In Drosophila melanogaster (Fruit fly), this protein is Opsin Rh5 (Rh5).